The sequence spans 405 residues: MENIMTLPKIKHVRAWFIGGATAEKGAGGGDYHDQGGNHWIDDHIATPMSKYRDYEQSRQSFGINVLGTLIVEVEAENGQTGFAVSTAGEMGCFIVEKHLNRFIEGKCVSDIKLIHDQMLGATMYYSGSGGLVMNTISCVDLALWDLFGKVVGLPVYKLLGGAVRDEIQFYATGARPDLAKEMGFIGGKMPTHWGPHDGDAGIRKDAAMVADMREKCGPDFWLMLDCWMSQDVNYATKLAHACAPFNLKWIEECLPPQQYEGYRELKRNAPAGMMVTSGEHHGTLQSFRTLAETGIDIMQPDVGWCGGLTTLVEIAALAKSRGQLVVPHGSSVYSHHAVITFTNTPFSEFLMTSPDCSTLRPQFDPILLDEPVPVNGRIHKSVLDKPGFGVELNRDCHLKRPYSH.

H33 and R59 together coordinate substrate. 3 residues coordinate Mg(2+): D226, E252, and E280. Catalysis depends on H329, which acts as the Proton acceptor. Residue E349 participates in substrate binding.

Belongs to the mandelate racemase/muconate lactonizing enzyme family. RhamD subfamily. In terms of assembly, homooctamer; tetramer of dimers. Requires Mg(2+) as cofactor.

The enzyme catalyses L-rhamnonate = 2-dehydro-3-deoxy-L-rhamnonate + H2O. Its function is as follows. Catalyzes the dehydration of L-rhamnonate to 2-keto-3-deoxy-L-rhamnonate (KDR). This chain is L-rhamnonate dehydratase, found in Salmonella typhi.